A 431-amino-acid polypeptide reads, in one-letter code: Enolase (431 aa).

Residue glutamine 167 coordinates (2R)-2-phosphoglycerate. Residue glutamate 209 is the Proton donor of the active site. Residues aspartate 246, glutamate 289, and aspartate 316 each coordinate Mg(2+). (2R)-2-phosphoglycerate contacts are provided by lysine 341, arginine 370, serine 371, and lysine 392. Lysine 341 (proton acceptor) is an active-site residue.

It belongs to the enolase family. In terms of assembly, component of the RNA degradosome, a multiprotein complex involved in RNA processing and mRNA degradation. The cofactor is Mg(2+).

Its subcellular location is the cytoplasm. The protein localises to the secreted. It is found in the cell surface. The catalysed reaction is (2R)-2-phosphoglycerate = phosphoenolpyruvate + H2O. It functions in the pathway carbohydrate degradation; glycolysis; pyruvate from D-glyceraldehyde 3-phosphate: step 4/5. Catalyzes the reversible conversion of 2-phosphoglycerate (2-PG) into phosphoenolpyruvate (PEP). It is essential for the degradation of carbohydrates via glycolysis. The protein is Enolase of Chromohalobacter salexigens (strain ATCC BAA-138 / DSM 3043 / CIP 106854 / NCIMB 13768 / 1H11).